The primary structure comprises 203 residues: tRNA (cytidine(56)-2'-O)-methyltransferase (203 aa).

S-adenosyl-L-methionine contacts are provided by residues leucine 80, 109-113 (GAEKV), and 127-134 (IGNQPHSE). Residues 178 to 203 (AEQDKAEGKATPGKNWENSGFTGDNP) are disordered. The span at 193–203 (WENSGFTGDNP) shows a compositional bias: polar residues.

The protein belongs to the aTrm56 family. As to quaternary structure, homodimer.

It localises to the cytoplasm. It carries out the reaction cytidine(56) in tRNA + S-adenosyl-L-methionine = 2'-O-methylcytidine(56) in tRNA + S-adenosyl-L-homocysteine + H(+). Functionally, specifically catalyzes the AdoMet-dependent 2'-O-ribose methylation of cytidine at position 56 in tRNAs. This Pyrococcus horikoshii (strain ATCC 700860 / DSM 12428 / JCM 9974 / NBRC 100139 / OT-3) protein is tRNA (cytidine(56)-2'-O)-methyltransferase.